A 417-amino-acid chain; its full sequence is Probable tubulin polyglutamylase ttll-9 (417 aa).

Residues 23-372 (QRKKKILFKC…EKKLIGNENE (350 aa)) form the TTL domain. ATP-binding positions include 188–191 (QCYV), K201, and D203.

This sequence belongs to the tubulin--tyrosine ligase family. Expressed in head sensory neurons.

Polyglutamylase that forms polyglutamate side chains on tubulin. Acts when complexed with other proteins. Appears to be dispensable for polar spindle formation in dividing embryonic cells, for cilia-dependent osmotic avoidance and for male mating behavior. Probably by regulating microtubule stability via the glutamylation of tubulin, regulates PLM axon developmental growth. This chain is Probable tubulin polyglutamylase ttll-9, found in Caenorhabditis elegans.